A 495-amino-acid polypeptide reads, in one-letter code: Transmembrane protein 161A (495 aa).

A signal peptide spans 1–28 (MALMGVQLVVSLLAVSIMQRMAPHLSFA). Topologically, residues 29–99 (RWLLCNGSLL…VNVMDALVLR (71 aa)) are extracellular. N-linked (GlcNAc...) asparagine glycosylation is present at Asn34. A helical transmembrane segment spans residues 100–120 (FFVEYQWLIDFAVYATGIYLF). Residues 121-135 (TEGYYSVVDASKEVN) are Cytoplasmic-facing. Residues 136–156 (IASIWCVLTVLFCLRTLYLLM) traverse the membrane as a helical segment. The Extracellular portion of the chain corresponds to 157-167 (SHYFLSEEGGE). Residues 168 to 188 (RSVCLAFGFLSLLIAMLVLVV) traverse the membrane as a helical segment. Residues 189-227 (REDYLEFGLEPGFTSLFDNFEVFARKQGYEWSVPFTKLS) are Cytoplasmic-facing. The chain crosses the membrane as a helical span at residues 228-248 (VKLGLAVICAFIGALLAFPGL). The Extracellular segment spans residues 249 to 265 (RLAQTHLDAVQMNADRP). A helical transmembrane segment spans residues 266 to 286 (MIQILLHMSFLSPLVIIVMWI). Topologically, residues 287–305 (KPIARDFLGNAPMGKTSVT) are cytoplasmic. A helical transmembrane segment spans residues 306–326 (LLSSSAFSSVRLWTIVVLCVL). The Extracellular segment spans residues 327-367 (RLLLTRYHLQAYLNLAQKWVEQMKKEAGRIAAIDIQRKVTR). Residues 368–388 (IFCYLTVVTLQYLIPILLVLF) traverse the membrane as a helical segment. The Cytoplasmic portion of the chain corresponds to 389–465 (STLALKSLGD…ALLTPIFFRG (77 aa)). A helical transmembrane segment spans residues 466 to 486 (IFAFLTWWVAACQLISSLFGI). Topologically, residues 487–495 (YFHQYLMHN) are extracellular.

It belongs to the TMEM161 family.

Its subcellular location is the membrane. May play a role in protection against oxidative stress. This is Transmembrane protein 161A (tmem161a) from Danio rerio (Zebrafish).